Here is a 145-residue protein sequence, read N- to C-terminus: FAD synthase (145 aa).

Residues 5–6, 10–13, Asp92, and Tyr119 each bind ATP; these read TF and HPGH.

It belongs to the archaeal FAD synthase family. As to quaternary structure, homodimer. The cofactor is a divalent metal cation.

It catalyses the reaction FMN + ATP + H(+) = FAD + diphosphate. The protein operates within cofactor biosynthesis; FAD biosynthesis; FAD from FMN: step 1/1. Functionally, catalyzes the transfer of the AMP portion of ATP to flavin mononucleotide (FMN) to produce flavin adenine dinucleotide (FAD) coenzyme. In Methanothermus fervidus (strain ATCC 43054 / DSM 2088 / JCM 10308 / V24 S), this protein is FAD synthase.